The chain runs to 531 residues: Polypyrimidine tract-binding protein 2 (531 aa).

Met1 carries the N-acetylmethionine modification. Phosphoserine is present on residues Ser26 and Ser27. RRM domains are found at residues Arg59–His133 and Leu181–Leu257. Ser308 is modified (phosphoserine). RRM domains lie at Thr338–His412 and Ala455–Ser529.

In terms of assembly, monomer. Interacts with NOVA1; the interaction is direct. Identified in a mRNP complex, at least composed of DHX9, DDX3X, ELAVL1, HNRNPU, IGF2BP1, ILF3, PABPC1, PCBP2, PTBP2, STAU1, STAU2, SYNCRIP and YBX1. Part of a ternary complex containing KHSRP and HNRPH1. Interacts with NOVA2; the interaction is direct. Mainly expressed in brain although also detected in other tissues like heart and skeletal muscle. Isoform 1 and isoform 2 are specifically expressed in neuronal tissues. Isoform 3 and isoform 4 are expressed in non-neuronal tissues. Isoform 5 and isoform 6 are truncated forms expressed in non-neuronal tissues.

Its subcellular location is the nucleus. Its function is as follows. RNA-binding protein which binds to intronic polypyrimidine tracts and mediates negative regulation of exons splicing. May antagonize in a tissue-specific manner the ability of NOVA1 to activate exon selection. In addition to its function in pre-mRNA splicing, plays also a role in the regulation of translation. In terms of biological role, reduced affinity for RNA. This is Polypyrimidine tract-binding protein 2 from Homo sapiens (Human).